The sequence spans 153 residues: Transthyretin (153 aa).

A signal peptide spans 1–24; it reads MAYYNTLALLTIFIFSGAFHRAQG. C33 bears the Sulfocysteine mark. L-thyroxine-binding residues include K38, E77, and S140.

Belongs to the transthyretin family. In terms of assembly, homotetramer. Dimer of dimers. In the homotetramer, subunits assemble around a central channel that can accommodate two ligand molecules. Interacts with RBP4. Sulfonation of the reactive cysteine Cys-33 enhances the stability of the native conformation of TTR, avoiding misassembly of the protein leading to amyloid formation. In terms of tissue distribution, detected in plasma (at protein level). Expressed during metamorphosis in tadpole liver but not in tadpole brain, nor adult liver.

The protein resides in the secreted. Its function is as follows. Thyroid hormone-binding protein, with a much higher binding affinity for triiodothyronine (T3) than for thyroxine (T4). Probably transports triiodothyronine from the bloodstream to the brain. This is Transthyretin from Aquarana catesbeiana (American bullfrog).